Here is a 381-residue protein sequence, read N- to C-terminus: Dual-specificity RNA methyltransferase RlmN (381 aa).

The active-site Proton acceptor is E86. Positions 105–338 (RHARYTICVS…CTIRQSKGLD (234 aa)) constitute a Radical SAM core domain. C112 and C343 are joined by a disulfide. 3 residues coordinate [4Fe-4S] cluster: C119, C123, and C126. S-adenosyl-L-methionine is bound by residues 169 to 170 (GE), S201, 224 to 226 (SLH), and N300. The active-site S-methylcysteine intermediate is the C343. The interval 351-381 (ENPKFRANVSGNSAAKTEEKPTNDKTNVSKK) is disordered.

The protein belongs to the radical SAM superfamily. RlmN family. The cofactor is [4Fe-4S] cluster.

The protein resides in the cytoplasm. The catalysed reaction is adenosine(2503) in 23S rRNA + 2 reduced [2Fe-2S]-[ferredoxin] + 2 S-adenosyl-L-methionine = 2-methyladenosine(2503) in 23S rRNA + 5'-deoxyadenosine + L-methionine + 2 oxidized [2Fe-2S]-[ferredoxin] + S-adenosyl-L-homocysteine. It carries out the reaction adenosine(37) in tRNA + 2 reduced [2Fe-2S]-[ferredoxin] + 2 S-adenosyl-L-methionine = 2-methyladenosine(37) in tRNA + 5'-deoxyadenosine + L-methionine + 2 oxidized [2Fe-2S]-[ferredoxin] + S-adenosyl-L-homocysteine. Specifically methylates position 2 of adenine 2503 in 23S rRNA and position 2 of adenine 37 in tRNAs. m2A2503 modification seems to play a crucial role in the proofreading step occurring at the peptidyl transferase center and thus would serve to optimize ribosomal fidelity. This chain is Dual-specificity RNA methyltransferase RlmN, found in Campylobacter concisus (strain 13826).